We begin with the raw amino-acid sequence, 186 residues long: Translation initiation factor IF-3 (186 aa).

Residues 1–21 are disordered; it reads MINRSSGKDRDRSRSGDKELR.

It belongs to the IF-3 family. As to quaternary structure, monomer.

Its subcellular location is the cytoplasm. In terms of biological role, IF-3 binds to the 30S ribosomal subunit and shifts the equilibrium between 70S ribosomes and their 50S and 30S subunits in favor of the free subunits, thus enhancing the availability of 30S subunits on which protein synthesis initiation begins. The protein is Translation initiation factor IF-3 of Borrelia turicatae (strain 91E135).